Consider the following 375-residue polypeptide: Trichodiene synthase (375 aa).

Belongs to the trichodiene synthase family.

The catalysed reaction is (2E,6E)-farnesyl diphosphate = trichodiene + diphosphate. It functions in the pathway sesquiterpene biosynthesis; trichothecene biosynthesis. Its function is as follows. TS is a member of the terpene cyclase group of enzymes. It catalyzes the isomerization and cyclization of farnesyl pyro-phosphate to form trichodiene, the first cyclic intermediate in the biosynthetic pathway for trichothecenes. It serves to branch trichothecene biosynthesis from the isoprenoid pathway. The protein is Trichodiene synthase (TRI5) of Fusarium acaciae-mearnsii.